Reading from the N-terminus, the 677-residue chain is MTQVAKKILVTCALPYANGSIHLGHMLEHIQADVWVRYQRMRGHEVNFICADDAHGTPIMLKAQQLGITPEQMIGEMSQEHQTDFAGFNISYDNYHSTHSEENRQLSELIYSRLKENGFIKNRTISQLYDPEKGMFLPDRFVKGTCPKCKSPDQYGDNCEVCGATYSPTELIEPKSVVSGATPVMRDSEHFFFDLPSFSEMLQAWTRSGALQEQVANKMQEWFESGLQQWDISRDAPYFGFEIPNAPGKYFYVWLDAPIGYMGSFKNLCDKRGDSVSFDEYWKKDSTAELYHFIGKDIVYFHSLFWPAMLEGSNFRKPSNLFVHGYVTVNGAKMSKSRGTFIKASTWLNHFDADSLRYYYTAKLSSRIDDIDLNLEDFVQRVNADIVNKVVNLASRNAGFINKRFDGVLASELADPQLYKTFTDAAEVIGEAWESREFGKAVREIMALADLANRYVDEQAPWVVAKQEGRDADLQAICSMGINLFRVLMTYLKPVLPKLTERAEAFLNTELTWDGIQQPLLGHKVNPFKALYNRIDMRQVEALVEASKEEVKAAAAPVTGPLADDPIQETITFDDFAKVDLRVALIENAEFVEGSDKLLRLTLDLGGEKRNVFSGIRSAYPDPQALIGRHTIMVANLAPRKMRFGISEGMVMAAGPGGKDIFLLSPDAGAKPGHQVK.

Positions 15–25 (PYANGSIHLGH) match the 'HIGH' region motif. Positions 146, 149, 159, and 162 each coordinate Zn(2+). The 'KMSKS' region signature appears at 333–337 (KMSKS). Lys-336 serves as a coordination point for ATP. Residues 575–677 (DFAKVDLRVA…AGAKPGHQVK (103 aa)) form the tRNA-binding domain.

It belongs to the class-I aminoacyl-tRNA synthetase family. MetG type 1 subfamily. Homodimer. Requires Zn(2+) as cofactor.

It is found in the cytoplasm. It carries out the reaction tRNA(Met) + L-methionine + ATP = L-methionyl-tRNA(Met) + AMP + diphosphate. Its function is as follows. Is required not only for elongation of protein synthesis but also for the initiation of all mRNA translation through initiator tRNA(fMet) aminoacylation. The chain is Methionine--tRNA ligase (metG) from Escherichia coli (strain K12).